A 248-amino-acid chain; its full sequence is 3-deoxy-manno-octulosonate cytidylyltransferase (248 aa).

This sequence belongs to the KdsB family.

Its subcellular location is the cytoplasm. The catalysed reaction is 3-deoxy-alpha-D-manno-oct-2-ulosonate + CTP = CMP-3-deoxy-beta-D-manno-octulosonate + diphosphate. The protein operates within nucleotide-sugar biosynthesis; CMP-3-deoxy-D-manno-octulosonate biosynthesis; CMP-3-deoxy-D-manno-octulosonate from 3-deoxy-D-manno-octulosonate and CTP: step 1/1. It participates in bacterial outer membrane biogenesis; lipopolysaccharide biosynthesis. Activates KDO (a required 8-carbon sugar) for incorporation into bacterial lipopolysaccharide in Gram-negative bacteria. The polypeptide is 3-deoxy-manno-octulosonate cytidylyltransferase (Photobacterium profundum (strain SS9)).